A 642-amino-acid polypeptide reads, in one-letter code: 3D-(3,5/4)-trihydroxycyclohexane-1,2-dione hydrolase (642 aa).

A thiamine diphosphate-binding site is contributed by E71. The tract at residues 446–526 is thiamine pyrophosphate binding; sequence SLPGDVQRIW…INILVFDNSG (81 aa). D497 and N524 together coordinate Mg(2+).

The protein belongs to the TPP enzyme family. The cofactor is Mg(2+). Thiamine diphosphate serves as cofactor.

It catalyses the reaction 3D-3,5/4-trihydroxycyclohexane-1,2-dione + H2O = 5-deoxy-D-glucuronate + H(+). It participates in polyol metabolism; myo-inositol degradation into acetyl-CoA; acetyl-CoA from myo-inositol: step 3/7. In terms of biological role, involved in the cleavage of the C1-C2 bond of 3D-(3,5/4)-trihydroxycyclohexane-1,2-dione (THcHDO) to yield 5-deoxy-glucuronate (5DG). The chain is 3D-(3,5/4)-trihydroxycyclohexane-1,2-dione hydrolase from Lacticaseibacillus casei (Lactobacillus casei).